Reading from the N-terminus, the 429-residue chain is MRDALNAGLIEFLKASPTPFHATASLVQRLEAAGYQRLDERDSWATVPGGRYYVTRNDSSIIAIKLGKLSPLLGGIRMVGAHTDSPCLRVKPQPELQRQGFLQLGVEVYGGALLAPWFDRDLSLAGRVTFRRDGKVESQLIDFKLPIAVIPNLAIHLNRTANEGWQINPQTELPPILAQVAGDERVDFRALLTEQLAREHDLNADVVLDYELSFYDTQDAALIGLNGDFIAAARLDNLLSCYAGLQALLNADSDETCVLVCNDHEEVGSCSACGADGPMLEQTLQRLLPDGDDYVRAIQRSLMVSADNAHGVHPNYADKHDGNHGPKLNAGPVIKVNNNQRYATNSETAGFFRHLCMAEEVPVQSFVVRSDMGCGSTIGPITASHLGVRTVDIGLPTFAMHSIRELCGSHDLAHLVKVLTAFYRSRELP.

3 residues coordinate Zn(2+): H82, H156, and H401.

The protein belongs to the peptidase M18 family. Zn(2+) is required as a cofactor.

The polypeptide is Probable M18 family aminopeptidase 2 (Pseudomonas entomophila (strain L48)).